Reading from the N-terminus, the 169-residue chain is Cell division inhibitor SulA (169 aa).

The interval 106 to 112 (ALRTGNY) is ftsZ binding. The tract at residues 162 to 169 (KIHSNLYH) is lon protease binding.

The protein belongs to the SulA family. In terms of assembly, interacts with FtsZ. Post-translationally, is rapidly cleaved and degraded by the Lon protease once DNA damage is repaired.

In terms of biological role, component of the SOS system and an inhibitor of cell division. Accumulation of SulA causes rapid cessation of cell division and the appearance of long, non-septate filaments. In the presence of GTP, binds a polymerization-competent form of FtsZ in a 1:1 ratio, thus inhibiting FtsZ polymerization and therefore preventing it from participating in the assembly of the Z ring. This mechanism prevents the premature segregation of damaged DNA to daughter cells during cell division. The chain is Cell division inhibitor SulA from Citrobacter koseri (strain ATCC BAA-895 / CDC 4225-83 / SGSC4696).